The following is a 567-amino-acid chain: uncharacterized protein (567 aa).

Helical transmembrane passes span 20–40, 69–89, 95–115, 126–146, 168–188, and 528–548; these read FTIL…SGVL, SLET…SVFI, AYLT…VALI, ILLN…FMCL, IPLV…YLLF, and IFGS…LLAI.

The protein resides in the cell membrane. This is an uncharacterized protein from Escherichia coli (strain K12).